Here is a 688-residue protein sequence, read N- to C-terminus: Elongation factor G (688 aa).

One can recognise a tr-type G domain in the interval 8 to 282 (DKFRNFGIMA…GVVDYLPSPL (275 aa)). GTP contacts are provided by residues 17–24 (AHIDAGKT), 81–85 (DTPGH), and 135–138 (NKMD).

It belongs to the TRAFAC class translation factor GTPase superfamily. Classic translation factor GTPase family. EF-G/EF-2 subfamily.

The protein localises to the cytoplasm. In terms of biological role, catalyzes the GTP-dependent ribosomal translocation step during translation elongation. During this step, the ribosome changes from the pre-translocational (PRE) to the post-translocational (POST) state as the newly formed A-site-bound peptidyl-tRNA and P-site-bound deacylated tRNA move to the P and E sites, respectively. Catalyzes the coordinated movement of the two tRNA molecules, the mRNA and conformational changes in the ribosome. The polypeptide is Elongation factor G (Clostridium beijerinckii (strain ATCC 51743 / NCIMB 8052) (Clostridium acetobutylicum)).